The primary structure comprises 969 residues: Protein translocase subunit SecA (969 aa).

ATP contacts are provided by residues Gln99, 117 to 121 (GEGKT), and Asp631.

This sequence belongs to the SecA family. As to quaternary structure, monomer and homodimer. Part of the essential Sec protein translocation apparatus which comprises SecA, SecYEG and auxiliary proteins SecDF. Other proteins may also be involved.

The protein resides in the cell inner membrane. Its subcellular location is the cytoplasm. It carries out the reaction ATP + H2O + cellular proteinSide 1 = ADP + phosphate + cellular proteinSide 2.. In terms of biological role, part of the Sec protein translocase complex. Interacts with the SecYEG preprotein conducting channel. Has a central role in coupling the hydrolysis of ATP to the transfer of proteins into and across the cell membrane, serving as an ATP-driven molecular motor driving the stepwise translocation of polypeptide chains across the membrane. This Chlamydia trachomatis serovar D (strain ATCC VR-885 / DSM 19411 / UW-3/Cx) protein is Protein translocase subunit SecA.